A 122-amino-acid polypeptide reads, in one-letter code: Large ribosomal subunit protein uL14 (122 aa).

It belongs to the universal ribosomal protein uL14 family. Part of the 50S ribosomal subunit. Forms a cluster with proteins L3 and L19. In the 70S ribosome, L14 and L19 interact and together make contacts with the 16S rRNA in bridges B5 and B8.

Binds to 23S rRNA. Forms part of two intersubunit bridges in the 70S ribosome. In Cupriavidus metallidurans (strain ATCC 43123 / DSM 2839 / NBRC 102507 / CH34) (Ralstonia metallidurans), this protein is Large ribosomal subunit protein uL14.